The primary structure comprises 120 residues: Large ribosomal subunit protein uL18 (120 aa).

This sequence belongs to the universal ribosomal protein uL18 family. In terms of assembly, part of the 50S ribosomal subunit; part of the 5S rRNA/L5/L18/L25 subcomplex. Contacts the 5S and 23S rRNAs.

This is one of the proteins that bind and probably mediate the attachment of the 5S RNA into the large ribosomal subunit, where it forms part of the central protuberance. The chain is Large ribosomal subunit protein uL18 from Rhodospirillum centenum (strain ATCC 51521 / SW).